Here is a 217-residue protein sequence, read N- to C-terminus: Elongation factor Ts (217 aa).

Positions T82 to V85 are involved in Mg(2+) ion dislocation from EF-Tu.

It belongs to the EF-Ts family.

It is found in the cytoplasm. In terms of biological role, associates with the EF-Tu.GDP complex and induces the exchange of GDP to GTP. It remains bound to the aminoacyl-tRNA.EF-Tu.GTP complex up to the GTP hydrolysis stage on the ribosome. In Prochlorococcus marinus (strain SARG / CCMP1375 / SS120), this protein is Elongation factor Ts.